Consider the following 284-residue polypeptide: UPF0276 protein PA14_21580 (284 aa).

This sequence belongs to the UPF0276 family.

This is UPF0276 protein PA14_21580 from Pseudomonas aeruginosa (strain UCBPP-PA14).